A 107-amino-acid polypeptide reads, in one-letter code: Nucleoid-associated protein Rru_A3472 (107 aa).

Belongs to the YbaB/EbfC family. As to quaternary structure, homodimer.

The protein localises to the cytoplasm. The protein resides in the nucleoid. In terms of biological role, binds to DNA and alters its conformation. May be involved in regulation of gene expression, nucleoid organization and DNA protection. The polypeptide is Nucleoid-associated protein Rru_A3472 (Rhodospirillum rubrum (strain ATCC 11170 / ATH 1.1.1 / DSM 467 / LMG 4362 / NCIMB 8255 / S1)).